A 163-amino-acid polypeptide reads, in one-letter code: Large ribosomal subunit protein uL18 (163 aa).

The protein belongs to the universal ribosomal protein uL18 family. In terms of assembly, part of the 50S ribosomal subunit. Contacts the 5S and 23S rRNAs.

Its function is as follows. This is one of the proteins that bind and probably mediate the attachment of the 5S RNA into the large ribosomal subunit, where it forms part of the central protuberance. This is Large ribosomal subunit protein uL18 from Thermoplasma acidophilum (strain ATCC 25905 / DSM 1728 / JCM 9062 / NBRC 15155 / AMRC-C165).